The primary structure comprises 676 residues: LIM domain-containing protein 1 (676 aa).

The interval 54–134 (KIHLQQQQQQ…PPYPPQEQRS (81 aa)) is mediates nuclear export. 2 disordered regions span residues 104 to 163 (KPPL…SAFH) and 189 to 389 (KWGD…TSLV). Phosphoserine is present on serine 145. Residues 186 to 260 (ASPKWGDKPG…IGGRSSEKPT (75 aa)) form an interaction with EGLN1/PHD2 region. Low complexity-rich tracts occupy residues 201–213 (GLSV…SSPG) and 232–242 (LSLSSSRSSEG). Phosphoserine occurs at positions 233 and 239. Gly residues predominate over residues 243-253 (SLGGQNSGIGG). The segment covering 262 to 271 (LWSTASSQRV) has biased composition (polar residues). Phosphoserine is present on residues serine 272, serine 277, serine 304, and serine 316. A compositionally biased stretch (low complexity) spans 343–360 (SYLSSSAPSSSPAGLDGS). The interval 404–442 (GPLGWSSDGSLGSVLLDSPSSPRVRLPCQPLVPGPELRP) is interaction with RB1. Phosphoserine occurs at positions 421 and 424. LIM zinc-binding domains follow at residues 470–531 (GACV…SGFQ), 535–595 (DRCF…VLAP), and 595–664 (PKCA…RLEK). The segment at 472 to 676 (CVKCSKGVFG…SSTALHQHHF (205 aa)) is necessary for nuclear localization.

Belongs to the zyxin/ajuba family. In terms of assembly, interacts (via LIM domains) with TRAF6. Found in a complex with TRAF6, PRKCZ and SQSTM1. Interacts (via LIM domains) SNAI2/SLUG (via SNAG domain) and SCRT1 (via SNAG domain). Interacts with SQSTM1 and RB1. Found in a complex composed of LIMD1, VHL, EGLN1/PHD2, ELOB and CUL2. Interacts with EIF4E, AGO1, AGO2, DCP2, DDX6, LATS1, LATS2, EGLN1/PHD2, EGLN2/PHD1 and EGLN3/PHD3. Interacts (via LIM zinc-binding 2) with isoform 1 and isoform 3 of VHL. Interacts (via LIM domains) with SNAI1 (via SNAG domain). In terms of processing, phosphorylated during mitosis. As to expression, expressed in normal and breast cancer tissues (at protein level). Ubiquitous.

The protein resides in the cytoplasm. It is found in the nucleus. The protein localises to the P-body. It localises to the cell junction. Its subcellular location is the adherens junction. The protein resides in the focal adhesion. Adapter or scaffold protein which participates in the assembly of numerous protein complexes and is involved in several cellular processes such as cell fate determination, cytoskeletal organization, repression of gene transcription, cell-cell adhesion, cell differentiation, proliferation and migration. Positively regulates microRNA (miRNA)-mediated gene silencing and is essential for P-body formation and integrity. Acts as a hypoxic regulator by bridging an association between the prolyl hydroxylases and VHL enabling efficient degradation of HIF1A. Acts as a transcriptional corepressor for SNAI1- and SNAI2/SLUG-dependent repression of E-cadherin transcription. Negatively regulates the Hippo signaling pathway and antagonizes phosphorylation of YAP1. Inhibits E2F-mediated transcription, and suppresses the expression of the majority of genes with E2F1-responsive elements. Regulates osteoblast development, function, differentiation and stress osteoclastogenesis. Enhances the ability of TRAF6 to activate adapter protein complex 1 (AP-1) and negatively regulates the canonical Wnt receptor signaling pathway in osteoblasts. May act as a tumor suppressor by inhibiting cell proliferation. The protein is LIM domain-containing protein 1 (LIMD1) of Homo sapiens (Human).